Reading from the N-terminus, the 84-residue chain is Metallothionein-like protein 4A (84 aa).

A disordered region spans residues 1–26 (MADTGKGSSVAGCNDSCGCPSPCPGG).

This sequence belongs to the metallothionein superfamily. Type 15 family. Expressed specifically in seeds.

It is found in the cytoplasm. The protein localises to the nucleus. The protein resides in the cell membrane. Functionally, metallothioneins have a high content of cysteine residues that bind various heavy metals. Functions as a metal chelator of copper (Cu) and zinc (Zn). Plays a role in storing and distributing Zn ion in seed. This chain is Metallothionein-like protein 4A (MT4A), found in Arabidopsis thaliana (Mouse-ear cress).